A 955-amino-acid polypeptide reads, in one-letter code: Kinesin-like protein NACK2 (955 aa).

A Kinesin motor domain is found at 36-357 (KILVTIRVRP…LCFATSAKEV (322 aa)). 120–127 (GQTSSGKT) is a binding site for ATP. 2 coiled-coil regions span residues 366–443 (VVAE…LKGS) and 566–604 (KASL…VMHL).

It belongs to the TRAFAC class myosin-kinesin ATPase superfamily. Kinesin family. KIN-7 subfamily.

It is found in the cytoplasm. It localises to the nucleus. The protein resides in the cytoskeleton. The protein localises to the phragmoplast. Its function is as follows. Probable plus end-directed motor protein that may function in the NACK-PQR (NPK1-NQK1/MEK1-NRK1) MAP kinase signaling pathway, which is essential for somatic cell cytokinesis, especially for the cell-plate formation and its expansion. May regulate the activity and the localization of NPK1, probably by association through the non-catalytic region of the kinase. In Nicotiana tabacum (Common tobacco), this protein is Kinesin-like protein NACK2 (NACK2).